Consider the following 313-residue polypeptide: MKKLNIIFAGTPDISAQVLKDLYKSQYNIQAVLTQPDRAKGRGKKVQFSPVKEVALANHTPVFQPLSFKKNPEVLEQIKQLKPDVIVVIAYGIIVPQEFLDIPRYGCLNIHVSLLPKWRGAAPIQRAIQAGDTKTGVCIMQMDAGLDTGDILNTLEIEIQETDTSQTLHDKFAKLSIKPLLETLEKIEIIKPEPQQGEPTYAHKITKQEGLIDFTKSAWQISCHIRAFTPWPGAYFILDDEAIKVGEFEILYQNTDNRKAGTIIDIYRSGFDIATSDKIIRFRQLQFPNKKMLNIVDILNGKDLDKYIGYKLG.

113-116 is a (6S)-5,6,7,8-tetrahydrofolate binding site; sequence SLLP.

This sequence belongs to the Fmt family.

It catalyses the reaction L-methionyl-tRNA(fMet) + (6R)-10-formyltetrahydrofolate = N-formyl-L-methionyl-tRNA(fMet) + (6S)-5,6,7,8-tetrahydrofolate + H(+). Its function is as follows. Attaches a formyl group to the free amino group of methionyl-tRNA(fMet). The formyl group appears to play a dual role in the initiator identity of N-formylmethionyl-tRNA by promoting its recognition by IF2 and preventing the misappropriation of this tRNA by the elongation apparatus. The chain is Methionyl-tRNA formyltransferase from Francisella tularensis subsp. mediasiatica (strain FSC147).